Consider the following 383-residue polypeptide: Dual-specificity RNA methyltransferase RlmN (383 aa).

Residue glutamate 93 is the Proton acceptor of the active site. A Radical SAM core domain is found at 99–339 (EETRGTLCVS…TTIRKTRGDD (241 aa)). A disulfide bridge links cysteine 106 with cysteine 344. Positions 113, 117, and 120 each coordinate [4Fe-4S] cluster. S-adenosyl-L-methionine is bound by residues 170–171 (GE), serine 202, 224–226 (SLH), and asparagine 301. The active-site S-methylcysteine intermediate is cysteine 344.

Belongs to the radical SAM superfamily. RlmN family. [4Fe-4S] cluster is required as a cofactor.

The protein resides in the cytoplasm. The catalysed reaction is adenosine(2503) in 23S rRNA + 2 reduced [2Fe-2S]-[ferredoxin] + 2 S-adenosyl-L-methionine = 2-methyladenosine(2503) in 23S rRNA + 5'-deoxyadenosine + L-methionine + 2 oxidized [2Fe-2S]-[ferredoxin] + S-adenosyl-L-homocysteine. It carries out the reaction adenosine(37) in tRNA + 2 reduced [2Fe-2S]-[ferredoxin] + 2 S-adenosyl-L-methionine = 2-methyladenosine(37) in tRNA + 5'-deoxyadenosine + L-methionine + 2 oxidized [2Fe-2S]-[ferredoxin] + S-adenosyl-L-homocysteine. Its function is as follows. Specifically methylates position 2 of adenine 2503 in 23S rRNA and position 2 of adenine 37 in tRNAs. m2A2503 modification seems to play a crucial role in the proofreading step occurring at the peptidyl transferase center and thus would serve to optimize ribosomal fidelity. The protein is Dual-specificity RNA methyltransferase RlmN of Ralstonia pickettii (strain 12J).